Consider the following 316-residue polypeptide: Ribosomal RNA small subunit methyltransferase H (316 aa).

S-adenosyl-L-methionine is bound by residues 35 to 37 (AGH), D55, F84, D105, and Q112.

Belongs to the methyltransferase superfamily. RsmH family.

The protein localises to the cytoplasm. It carries out the reaction cytidine(1402) in 16S rRNA + S-adenosyl-L-methionine = N(4)-methylcytidine(1402) in 16S rRNA + S-adenosyl-L-homocysteine + H(+). Specifically methylates the N4 position of cytidine in position 1402 (C1402) of 16S rRNA. The protein is Ribosomal RNA small subunit methyltransferase H of Streptococcus pneumoniae (strain JJA).